The chain runs to 910 residues: MDVVGENEALQQFFEAQGANGTLENPALDTSLLEEFLGNDFDLGALQRQLPDTPPYSASDSCSPPQVKGACYPTLRPTAGRTPAPFLHPTAAPAMPPMHPLQSTSGMGDSCQIHGGFHSCHSNASHLATPLDQSVSSHLGIGCSYPQQPLCHSPGASLPPTKKRKCTQALEDSGECRVWACHCRPMTSRSRSSEVQDPDSEGQNRMPTDQCSPALKWQPCHSVPWHSLLNSHYEKLPDVGYRVVTDKGFNFSPADEAFVCQKKNHFQITIHIQVWGSPKFVETEMGLKPIEMFYLKVFGTKVEATNQIIAIEQSQADRSKKIFNPVKIDLLADQVTKVTLGRLHFSETTANNMRKKGKPNPDQRYFMLVVGLYAANQDQFYLLSAHISERIIVRASNPGQFENDSDALWQRGQVPESIVCHGRVGINTDAPDEALVVCGNMKVMGTIMHPSDSRAKQNIQEVDTNEQLKRIAQMRIVEYDYKPEFASAMGINTAHQTGMIAQEVQEILPRAVREVGDVTCGNGETLENFLMVDKDQIFMENVGAVKQLCKLTNNLEERIEELEIWNRKLARLKRLSSWKSSASEASTISKSSRAVSASSPRRAVHKKNNKVYFSGKRQACPNWVFQTLVITLIAVMAFCALTIVALYILSLKDQDRRVPNLPPSNITSSQEPALLPTASSSAPNTSLVTTPASLQVPEITFCEILPCQETYCCPIRGMKEVSSSPVQRQSEEKEFHQRRWSEDKSKSVLARNALSGPDWESDWIDTTISSIQIMEIQQIIDHQYCIQSLQCGSGNYNYNIPVNKHTPTNVKFSLEINTTEPLIVFQCKFTLGNICFHSKRGTKGLESHREISQEMTQGYQHIWSLPVAPFSDSMFHFRVAAPDLADCSTDPYFAGIFFTDYFFYFYRRCA.

A DNA-binding region (NDT80) is located at residues 142–405; sequence GCSYPQQPLC…SNPGQFENDS (264 aa). The interval 189-208 is disordered; the sequence is RSRSSEVQDPDSEGQNRMPT. In terms of domain architecture, Peptidase S74 spans 451–559; it reads SDSRAKQNIQ…KLTNNLEERI (109 aa). Residues 543–575 adopt a coiled-coil conformation; it reads GAVKQLCKLTNNLEERIEELEIWNRKLARLKRL. A helical transmembrane segment spans residues 628 to 648; that stretch reads LVITLIAVMAFCALTIVALYI. The tract at residues 661-682 is disordered; that stretch reads LPPSNITSSQEPALLPTASSSA. Residues 663 to 682 show a composition bias toward polar residues; sequence PSNITSSQEPALLPTASSSA.

This sequence belongs to the MRF family.

It is found in the membrane. In Homo sapiens (Human), this protein is Myelin regulatory factor-like protein (MYRFL).